The sequence spans 178 residues: MSRIGKKPVVIPSGVTINVAAGNKVEVKGAKATLSKAFSTDVTFSVADNVATITPNNNSKNAVAQSGTARAILSNMVEGVSKGFERKLKIIGVGYRAKAQGNELNLTLGFSHPVVYKLPQGITAETPAPTEIILKGADKELLGKVASEIREYRKPEPYKGKGVRYEDEYVAKKEAKKK.

Belongs to the universal ribosomal protein uL6 family. Part of the 50S ribosomal subunit.

Its function is as follows. This protein binds to the 23S rRNA, and is important in its secondary structure. It is located near the subunit interface in the base of the L7/L12 stalk, and near the tRNA binding site of the peptidyltransferase center. This chain is Large ribosomal subunit protein uL6, found in Francisella tularensis subsp. mediasiatica (strain FSC147).